We begin with the raw amino-acid sequence, 1353 residues long: Patatin-like phospholipase domain-containing protein ZK370.4 (1353 aa).

A helical transmembrane segment spans residues 12–32; the sequence is IFLVTFIYNHVLLILFTVCII. Residues 49–64 are compositionally biased toward low complexity; sequence TPSSASSSATPSSRNS. 2 disordered regions span residues 49-188 and 199-218; these read TPSS…STAF and SRSY…VRPP. Over residues 91–123 the composition is skewed to polar residues; sequence SPKSGTPTNTQTIEPPTSLNLNMVNSASGSNLS. 2 stretches are compositionally biased toward basic residues: residues 126-138 and 170-184; these read RRMR…KKLY and PRRR…RRRQ. A nucleoside 3',5'-cyclic phosphate-binding positions include 245–372, 444–581, and 570–692; these read LKML…VITR, FGLV…VLRR, and IYLP…LGQY. One can recognise a PNPLA domain in the interval 942 to 1108; the sequence is LVLGGGGARG…VNNVPADVMR (167 aa). A GXGXXG motif is present at residues 946–951; that stretch reads GGGARG. Residues 973 to 977 carry the GXSXG motif; the sequence is GTSIG. The active-site Nucleophile is serine 975. Aspartate 1095 acts as the Proton acceptor in catalysis. Residues 1095 to 1097 carry the DGA/G motif; the sequence is DGG. 3 disordered regions span residues 1230 to 1249, 1274 to 1293, and 1305 to 1353; these read EKET…PDVS, SMSL…DHFL, and YEEE…PPSS. Positions 1328-1337 are enriched in low complexity; sequence GPPSSSSSGG.

The protein belongs to the NTE family.

The protein resides in the membrane. The sequence is that of Patatin-like phospholipase domain-containing protein ZK370.4 from Caenorhabditis elegans.